A 233-amino-acid polypeptide reads, in one-letter code: Phosphatidylserine decarboxylase proenzyme (233 aa).

Ser190 serves as the catalytic Schiff-base intermediate with substrate; via pyruvic acid. Ser190 is modified (pyruvic acid (Ser); by autocatalysis).

The protein belongs to the phosphatidylserine decarboxylase family. PSD-A subfamily. Heterodimer of a large membrane-associated beta subunit and a small pyruvoyl-containing alpha subunit. Requires pyruvate as cofactor. Post-translationally, is synthesized initially as an inactive proenzyme. Formation of the active enzyme involves a self-maturation process in which the active site pyruvoyl group is generated from an internal serine residue via an autocatalytic post-translational modification. Two non-identical subunits are generated from the proenzyme in this reaction, and the pyruvate is formed at the N-terminus of the alpha chain, which is derived from the carboxyl end of the proenzyme. The post-translation cleavage follows an unusual pathway, termed non-hydrolytic serinolysis, in which the side chain hydroxyl group of the serine supplies its oxygen atom to form the C-terminus of the beta chain, while the remainder of the serine residue undergoes an oxidative deamination to produce ammonia and the pyruvoyl prosthetic group on the alpha chain.

Its subcellular location is the cell membrane. The enzyme catalyses a 1,2-diacyl-sn-glycero-3-phospho-L-serine + H(+) = a 1,2-diacyl-sn-glycero-3-phosphoethanolamine + CO2. The protein operates within phospholipid metabolism; phosphatidylethanolamine biosynthesis; phosphatidylethanolamine from CDP-diacylglycerol: step 2/2. Functionally, catalyzes the formation of phosphatidylethanolamine (PtdEtn) from phosphatidylserine (PtdSer). This chain is Phosphatidylserine decarboxylase proenzyme, found in Xanthobacter autotrophicus (strain ATCC BAA-1158 / Py2).